A 911-amino-acid polypeptide reads, in one-letter code: Alpha-actinin-4 (911 aa).

Residues 1-269 are actin-binding; it reads MVDYHAANQS…YVSSFYHAFS (269 aa). The interaction with VCL stretch occupies residues 12-26; that stretch reads QYGPSSAGNGAGGGG. Phosphotyrosine is present on tyrosine 31. Residues 40–61 form an interaction with VCL region; the sequence is RDLLLDPAWEKQQRKTFTAWCN. 2 Calponin-homology (CH) domains span residues 50-154 and 163-269; these read KQQR…LRFA and TSAK…HAFS. Positions 84–88 match the LXXLL motif motif; sequence LMLLL. Residues 108 to 126 are interaction with VCL; sequence KINNVNKALDFIASKGVKL. Lysine 114 is subject to N6-acetyllysine. Residues 177-192 are polyphosphoinositide (PIP2)-binding; that stretch reads TAPYKNVNVQNFHISW. Residue lysine 214 is modified to N6-acetyllysine. Threonine 249 is modified (phosphothreonine). 4 Spectrin repeats span residues 293 to 403, 413 to 518, 528 to 639, and 649 to 752; these read HLME…WLLN, HLAE…ALEK, QLHL…ALLE, and HLRR…EVEN. N6-acetyllysine is present on residues lysine 592 and lysine 625. The residue at position 696 (serine 696) is a Phosphoserine. Positions 736–911 are mediates interaction with MICALL2; the sequence is WEQLLTTIAR…STALYGESDL (176 aa). 2 EF-hand domains span residues 765–800 and 806–841; these read EQMQEFRASFNHFDKDHGGALGPEEFKACLISLGYD and QGEAEFNRIMSLVDPNHSGLVTFQAFIDFMSRETTD. Aspartate 778 lines the Ca(2+) pocket. Lysine 779 is subject to N6-acetyllysine. Ca(2+) is bound by residues aspartate 780 and glutamate 789. Lysine 859 carries the post-translational modification N6-acetyllysine. Serine 909 carries the post-translational modification Phosphoserine.

Belongs to the alpha-actinin family. In terms of assembly, homodimer; antiparallel. Binds TRIM3 at the N-terminus. Interacts with MICALL2 (preferentially in opened conformation); stimulated by RAB13 activation. Identified in a complex with CASK, IQGAP1, MAGI2, NPHS1, SPTAN1 and SPTBN1. Identified in a IGF2BP1-dependent mRNP granule complex containing untranslated mRNAs. Component of the CART complex, at least composed of ACTN4, HGS/HRS, MYO5B and TRIM3. Interacts with MAGI1. Interacts with PDLIM2. Interacts with PPARG and RARA. Binds to VCL; this interaction triggers VCL conformational changes. Interacts with SEPTIN14. Interacts with IGSF8. As to expression, widely expressed.

It localises to the nucleus. Its subcellular location is the cytoplasm. It is found in the cell junction. The protein localises to the cytoskeleton. The protein resides in the stress fiber. It localises to the perinuclear region. F-actin cross-linking protein which is thought to anchor actin to a variety of intracellular structures. This is a bundling protein. Probably involved in vesicular trafficking via its association with the CART complex. The CART complex is necessary for efficient transferrin receptor recycling but not for EGFR degradation. Involved in tight junction assembly in epithelial cells probably through interaction with MICALL2. Links MICALL2 to the actin cytoskeleton and recruits it to the tight junctions. May also function as a transcriptional coactivator, stimulating transcription mediated by the nuclear hormone receptors PPARG and RARA. Association with IGSF8 regulates the immune synapse formation and is required for efficient T-cell activation. The protein is Alpha-actinin-4 of Homo sapiens (Human).